A 397-amino-acid chain; its full sequence is Chorismate synthase (397 aa).

Positions 40 and 46 each coordinate NADP(+). Residues arginine 129–serine 131, glutamine 257–alanine 258, glycine 302, lysine 317–serine 321, and arginine 343 contribute to the FMN site.

It belongs to the chorismate synthase family. As to quaternary structure, homotetramer. FMNH2 serves as cofactor.

It catalyses the reaction 5-O-(1-carboxyvinyl)-3-phosphoshikimate = chorismate + phosphate. It participates in metabolic intermediate biosynthesis; chorismate biosynthesis; chorismate from D-erythrose 4-phosphate and phosphoenolpyruvate: step 7/7. Functionally, catalyzes the anti-1,4-elimination of the C-3 phosphate and the C-6 proR hydrogen from 5-enolpyruvylshikimate-3-phosphate (EPSP) to yield chorismate, which is the branch point compound that serves as the starting substrate for the three terminal pathways of aromatic amino acid biosynthesis. This reaction introduces a second double bond into the aromatic ring system. In Chlorobium limicola (strain DSM 245 / NBRC 103803 / 6330), this protein is Chorismate synthase.